We begin with the raw amino-acid sequence, 291 residues long: Taste receptor type 2 member 16 (291 aa).

Residue Met-1 is a topological domain, extracellular. A helical transmembrane segment spans residues 2-22 (IPIQLTVFFMIIYVLESLTII). Residues 23–41 (VQSSLIVAVLGREWLQVRR) are Cytoplasmic-facing. The chain crosses the membrane as a helical span at residues 42-62 (LMPVDMILISLGISRFCLQWA). The Extracellular portion of the chain corresponds to 63-84 (SMLNNFCSYLNLNYVLCNLTIT). Asn-80 is a glycosylation site (N-linked (GlcNAc...) asparagine). A helical transmembrane segment spans residues 85-105 (WEFFNILTFWLNSLLTVFYCI). Residues 106-125 (KVSSFTHHIFLWVRWRILRW) lie on the Cytoplasmic side of the membrane. A helical membrane pass occupies residues 126–146 (FPWILLGSLTIACVTIIPSAI). Residues 147–182 (GNYIQIQLLTMEHLPRNSTVTDRLEKFHQYQFQSHT) are Extracellular-facing. A glycan (N-linked (GlcNAc...) asparagine) is linked at Asn-163. Residues 183–203 (VALVIPFILFLASTILLMASL) traverse the membrane as a helical segment. The Cytoplasmic portion of the chain corresponds to 204–228 (TKQIQHHSTGHCNPSMKAHFTALRS). A helical membrane pass occupies residues 229 to 249 (LAILFIVFTSYFLIILITIIG). At 250–257 (TLFDKRCW) the chain is on the extracellular side. A helical transmembrane segment spans residues 258–278 (LWVWEAFVYAFILMHSTSLML). Residues 279–291 (SSPTLKRILKGKC) lie on the Cytoplasmic side of the membrane.

This sequence belongs to the G-protein coupled receptor T2R family. Interacts with RTP3 and RTP4.

The protein localises to the cell membrane. Receptor that may play a role in the perception of bitterness and is gustducin-linked. May function as a bitter taste receptor for the phytonutrient beta glucopyranosides, some of which are toxic and some of which lower the risk of cancer and cardiovascular disease. The activity of this receptor may stimulate alpha gustducin, mediate PLC-beta-2 activation and lead to the gating of TRPM5. In Pongo pygmaeus (Bornean orangutan), this protein is Taste receptor type 2 member 16 (TAS2R16).